Here is a 246-residue protein sequence, read N- to C-terminus: Probable transcriptional regulatory protein YebC (246 aa).

A disordered region spans residues 1 to 20; sequence MAGHSKWANTRHRKAAQDAK.

It belongs to the TACO1 family.

The protein resides in the cytoplasm. This chain is Probable transcriptional regulatory protein YebC, found in Salmonella choleraesuis (strain SC-B67).